Reading from the N-terminus, the 27-residue chain is Morintide mO5 (27 aa).

In terms of domain architecture, Chitin-binding type-1 spans 1-27; it reads NGLCCSQYGFCGTTSQYCSRANGCQSN. Cysteine 4 and cysteine 18 form a disulfide bridge.

As to expression, seeds (at protein level).

Its function is as follows. Chitin-binding protein which functions in defense against chitin-containing fungal pathogens. The sequence is that of Morintide mO5 from Moringa oleifera (Horseradish tree).